The primary structure comprises 509 residues: Cobyric acid synthase (509 aa).

A GATase cobBQ-type domain is found at 262–459 (ELKVGIIKLP…IHGIFENDDW (198 aa)). The active-site Nucleophile is Cys-343. Residue His-451 is part of the active site.

The protein belongs to the CobB/CobQ family. CobQ subfamily.

It participates in cofactor biosynthesis; adenosylcobalamin biosynthesis. In terms of biological role, catalyzes amidations at positions B, D, E, and G on adenosylcobyrinic A,C-diamide. NH(2) groups are provided by glutamine, and one molecule of ATP is hydrogenolyzed for each amidation. The chain is Cobyric acid synthase from Prochlorococcus marinus subsp. pastoris (strain CCMP1986 / NIES-2087 / MED4).